The primary structure comprises 157 residues: Large ribosomal subunit protein eL24 (157 aa).

The tract at residues 94–157 (RNQKPEVRKA…ISAPRVGGKR (64 aa)) is disordered. Basic and acidic residues predominate over residues 96–117 (QKPEVRKAQREQAIRAAKEAKK). A compositionally biased stretch (low complexity) spans 123-140 (KKPAAPSAKASTKTAQKP).

Belongs to the eukaryotic ribosomal protein eL24 family. Component of the large ribosomal subunit.

The protein resides in the cytoplasm. In terms of biological role, component of the large ribosomal subunit. The ribosome is a large ribonucleoprotein complex responsible for the synthesis of proteins in the cell. This chain is Large ribosomal subunit protein eL24 (rpl24), found in Pagrus major (Red sea bream).